We begin with the raw amino-acid sequence, 208 residues long: Fibroblast growth factor 6 (208 aa).

An N-terminal signal peptide occupies residues 1–37 (MALGQKLFITMSRGAGRLQGTLWALVFLGILVGMVVP). N-linked (GlcNAc...) asparagine glycosylation is present at N45. A disulfide bridge connects residues C90 and C157.

Belongs to the heparin-binding growth factors family. Interacts with FGFR1, FGFR2 and FGFR4. Affinity between fibroblast growth factors (FGFs) and their receptors is increased by heparan sulfate glycosaminoglycans that function as coreceptors. In terms of tissue distribution, leukemia cell lines with platelet/ megakaryocytic differentiation potential.

It localises to the secreted. Its subcellular location is the extracellular space. Functionally, plays an important role in the regulation of cell proliferation, cell differentiation, angiogenesis and myogenesis, and is required for normal muscle regeneration. This Homo sapiens (Human) protein is Fibroblast growth factor 6 (FGF6).